The primary structure comprises 1012 residues: DNA polymerase catalytic subunit (1012 aa).

The interval 1-31 (MDFFNPFIDPTRGGPRNTVRQPTPSQSPTVP) is disordered. Low complexity predominate over residues 21 to 31 (QPTPSQSPTVP).

Belongs to the DNA polymerase type-B family. As to quaternary structure, forms a complex with the ssDNA-binding protein, the DNA polymerase processivity factor, and the alkaline exonuclease. Interacts with the putative helicase-primase complex subunit; this interaction may coordinate leading and lagging strand DNA synthesis at the replication fork.

The protein resides in the host nucleus. It catalyses the reaction DNA(n) + a 2'-deoxyribonucleoside 5'-triphosphate = DNA(n+1) + diphosphate. The enzyme catalyses Endonucleolytic cleavage to 5'-phosphomonoester.. In terms of biological role, replicates viral genomic DNA. The replication complex is composed of six viral proteins: the DNA polymerase, processivity factor, primase, primase-associated factor, helicase, and ssDNA-binding protein. Additionally, the polymerase contains an intrinsic ribonuclease H (RNase H) activity that specifically degrades RNA/DNA heteroduplexes or duplex DNA substrates in the 5' to 3' direction. Therefore, it can catalyze the excision of the RNA primers that initiate the synthesis of Okazaki fragments at a replication fork during viral DNA replication. This chain is DNA polymerase catalytic subunit (ORF9), found in Human herpesvirus 8 type P (isolate GK18) (HHV-8).